The following is a 120-amino-acid chain: Large ribosomal subunit protein uL18 (120 aa).

The protein belongs to the universal ribosomal protein uL18 family. As to quaternary structure, part of the 50S ribosomal subunit; part of the 5S rRNA/L5/L18/L25 subcomplex. Contacts the 5S and 23S rRNAs.

Functionally, this is one of the proteins that bind and probably mediate the attachment of the 5S RNA into the large ribosomal subunit, where it forms part of the central protuberance. The chain is Large ribosomal subunit protein uL18 from Bordetella bronchiseptica (strain ATCC BAA-588 / NCTC 13252 / RB50) (Alcaligenes bronchisepticus).